Consider the following 340-residue polypeptide: PI-PLC X domain-containing protein 2 (340 aa).

In terms of domain architecture, PI-PLC X-box spans 42 to 215 (HLHNVPLSNL…KYQVLIFYHC (174 aa)). Active-site residues include His57 and His132.

Expressed at highest levels in brain, followed by stomach and small intestine. Detected at low levels in kidney, ey, thymus and slkeletal muscle.

It localises to the nucleus. The enzyme catalyses a 1,2-diacyl-sn-glycero-3-phospho-(1D-myo-inositol) + H2O = 1D-myo-inositol 1-phosphate + a 1,2-diacyl-sn-glycerol + H(+). Its function is as follows. Catalyzes the hydrolysis of inositol from phosphatidylinositol (1,2-diacyl-sn-glycero-3-phospho-(1D-myo-inositol), PI). Could also hydrolyze various multi-phosphorylated derivatives of PI, such as phosphatidylinositol-4,5 bisphosphate (PIP2), releasing inositol-1,4,5-trisphosphate (IP3) and the protein kinase C activator diacylglycerol (DAG), therefore mediating cell signaling. This chain is PI-PLC X domain-containing protein 2 (Plcxd2), found in Mus musculus (Mouse).